A 232-amino-acid chain; its full sequence is Large ribosomal subunit protein uL1 (232 aa).

The protein belongs to the universal ribosomal protein uL1 family. As to quaternary structure, part of the 50S ribosomal subunit.

Binds directly to 23S rRNA. The L1 stalk is quite mobile in the ribosome, and is involved in E site tRNA release. Functionally, protein L1 is also a translational repressor protein, it controls the translation of the L11 operon by binding to its mRNA. This Jannaschia sp. (strain CCS1) protein is Large ribosomal subunit protein uL1.